Consider the following 500-residue polypeptide: Protein-tyrosine sulfotransferase (500 aa).

The N-terminal stretch at 1–24 is a signal peptide; the sequence is MQMNSVWKLSLGLLLLSSVIGSFA. Topologically, residues 25–467 are lumenal; the sequence is ELDFGHCETL…SVLGEMGEEK (443 aa). Residues Arg121 and Glu142 contribute to the active site. 6 N-linked (GlcNAc...) asparagine glycosylation sites follow: Asn156, Asn248, Asn315, Asn343, Asn359, and Asn395. A helical transmembrane segment spans residues 468–488; that stretch reads LWKFVPVALMLLLIVLFFLFV. Residues 489-500 lie on the Cytoplasmic side of the membrane; that stretch reads NAKRRRTSKVKI.

Expressed throughout the plant body, highest levels of expression are in the root apical meristem.

The protein resides in the golgi apparatus membrane. It catalyses the reaction L-tyrosyl-[protein] + 3'-phosphoadenylyl sulfate = O-sulfo-L-tyrosine-[protein] + adenosine 3',5'-bisphosphate + H(+). Its function is as follows. Catalyzes the O-sulfation of tyrosine residues within acidic motifs of polypeptides. The chain is Protein-tyrosine sulfotransferase (TPST) from Arabidopsis thaliana (Mouse-ear cress).